The primary structure comprises 718 residues: Quinolinate synthase, chloroplastic (718 aa).

Residues 1 to 22 (MALALSVAPTSSSLSSLLSRTP) are compositionally biased toward low complexity. Residues 1-29 (MALALSVAPTSSSLSSLLSRTPNPSPNFR) form a disordered region. Residues 1–70 (MALALSVAPT…VNASPFSISA (70 aa)) constitute a chloroplast transit peptide. Cys132 acts as the Cysteine persulfide intermediate in catalysis. The iminosuccinate site is built by His280 and Ser306. Residue Cys360 participates in [4Fe-4S] cluster binding. Residues 389-391 (YIN) and Ser411 each bind iminosuccinate. Cys484 contacts [4Fe-4S] cluster. Iminosuccinate-binding positions include 510-512 (HLE) and Thr535. Cys640 contacts [4Fe-4S] cluster.

Belongs to the quinolinate synthase family. Type 1 subfamily. As to quaternary structure, homodimer. Interacts in vitro with NFS2, CpNIFS3 and AO. Part of a Cys defulfurase complex. It depends on [4Fe-4S] cluster as a cofactor. In terms of tissue distribution, expressed in roots, leaves, stems and flowers.

It is found in the plastid. Its subcellular location is the chloroplast. The catalysed reaction is iminosuccinate + dihydroxyacetone phosphate = quinolinate + phosphate + 2 H2O + H(+). It functions in the pathway cofactor biosynthesis; NAD(+) biosynthesis; quinolinate from iminoaspartate: step 1/1. Functionally, catalyzes the condensation of iminoaspartate with dihydroxyacetone phosphate to form quinolinate. Can complement nadA-deficient E.coli mutant. Essential for the de novo synthesis of NAD. Also participates in cysteine desulfurization mediated by NFS2. Can activate the cysteine desulfurase activity of NFS2 in vitro. The protein is Quinolinate synthase, chloroplastic of Arabidopsis thaliana (Mouse-ear cress).